Here is a 239-residue protein sequence, read N- to C-terminus: AEETSFVFSKFKPLEPNLILQGDALVTVAGVLQLTNVDSNGVPEPSSLGRATYSAPINIWDSATGLVASFATSFRFTIYAPNIATIADGLAFFLAPVASAPDSGGGFLGLFDSAVGDTTYQTVAVEFDTYENTVFTDPPYTHIGFDVNSISSIKTVKWSLANGEAAKVLITYNSAVKLLVASLVYPSSKTSFILADIVDLSSVLPEWVRVGFSAATGASKGYIETHDVFSWSFASKLAG.

D-glucose-binding residues include D88 and G106. E126 and D128 together coordinate Mn(2+). 3 residues coordinate Ca(2+): D128, N132, and D137. Residues D137 and H142 each contribute to the Mn(2+) site. D-glucose contacts are provided by G217 and A218.

It belongs to the leguminous lectin family. In terms of assembly, tetramer consisting of heterodimers of alpha and beta chains.

Galactose-binding lectin. Agglutinates human erythrocytes, and requires Ca(2+) and Mn(2+) ions for full agglutinating activity. Has antifungal activity against Fusarium sp., A.niger and A.flavus. This chain is Seed lectin beta chain, found in Spatholobus parviflorus (Butea parviflora).